The chain runs to 362 residues: Spermidine/putrescine import ATP-binding protein PotA (362 aa).

Positions 4–235 (IKLDHITKQY…PVNDFVARFI (232 aa)) constitute an ABC transporter domain. Position 37–44 (37–44 (GPSGSGKT)) interacts with ATP.

It belongs to the ABC transporter superfamily. Spermidine/putrescine importer (TC 3.A.1.11.1) family. As to quaternary structure, the complex is composed of two ATP-binding proteins (PotA), two transmembrane proteins (PotB and PotC) and a solute-binding protein (PotD).

Its subcellular location is the cell membrane. It catalyses the reaction ATP + H2O + polyamine-[polyamine-binding protein]Side 1 = ADP + phosphate + polyamineSide 2 + [polyamine-binding protein]Side 1.. Functionally, part of the ABC transporter complex PotABCD involved in spermidine/putrescine import. Responsible for energy coupling to the transport system. The chain is Spermidine/putrescine import ATP-binding protein PotA from Lactobacillus delbrueckii subsp. bulgaricus (strain ATCC BAA-365 / Lb-18).